Reading from the N-terminus, the 874-residue chain is Alanine--tRNA ligase (874 aa).

Zn(2+) is bound by residues His564, His568, Cys665, and His669.

Belongs to the class-II aminoacyl-tRNA synthetase family. Zn(2+) is required as a cofactor.

Its subcellular location is the cytoplasm. The enzyme catalyses tRNA(Ala) + L-alanine + ATP = L-alanyl-tRNA(Ala) + AMP + diphosphate. Functionally, catalyzes the attachment of alanine to tRNA(Ala) in a two-step reaction: alanine is first activated by ATP to form Ala-AMP and then transferred to the acceptor end of tRNA(Ala). Also edits incorrectly charged Ser-tRNA(Ala) and Gly-tRNA(Ala) via its editing domain. This is Alanine--tRNA ligase from Burkholderia pseudomallei (strain 1106a).